Here is a 316-residue protein sequence, read N- to C-terminus: tRNA dimethylallyltransferase (316 aa).

17–24 (GPTASGKT) lines the ATP pocket. 19-24 (TASGKT) lines the substrate pocket. Interaction with substrate tRNA stretches follow at residues 42–45 (DSAL), 166–170 (QRLSR), and 247–252 (RCVGYR).

Belongs to the IPP transferase family. In terms of assembly, monomer. Mg(2+) serves as cofactor.

It carries out the reaction adenosine(37) in tRNA + dimethylallyl diphosphate = N(6)-dimethylallyladenosine(37) in tRNA + diphosphate. Its function is as follows. Catalyzes the transfer of a dimethylallyl group onto the adenine at position 37 in tRNAs that read codons beginning with uridine, leading to the formation of N6-(dimethylallyl)adenosine (i(6)A). The sequence is that of tRNA dimethylallyltransferase from Salmonella typhi.